The primary structure comprises 178 residues: Peptide deformylase (178 aa).

Fe cation is bound by residues Cys-102 and His-144. Glu-145 is an active-site residue. His-148 lines the Fe cation pocket.

The protein belongs to the polypeptide deformylase family. It depends on Fe(2+) as a cofactor.

The catalysed reaction is N-terminal N-formyl-L-methionyl-[peptide] + H2O = N-terminal L-methionyl-[peptide] + formate. Functionally, removes the formyl group from the N-terminal Met of newly synthesized proteins. Requires at least a dipeptide for an efficient rate of reaction. N-terminal L-methionine is a prerequisite for activity but the enzyme has broad specificity at other positions. This Leptospira borgpetersenii serovar Hardjo-bovis (strain JB197) protein is Peptide deformylase.